The primary structure comprises 113 residues: Large ribosomal subunit protein bL17 (113 aa).

The protein belongs to the bacterial ribosomal protein bL17 family. In terms of assembly, part of the 50S ribosomal subunit. Contacts protein L32.

This Syntrophomonas wolfei subsp. wolfei (strain DSM 2245B / Goettingen) protein is Large ribosomal subunit protein bL17.